Here is a 193-residue protein sequence, read N- to C-terminus: Protein D5 (193 aa).

Its function is as follows. Repression of replication initiation (possible). This is Protein D5 (ddpE) from Dictyostelium discoideum (Social amoeba).